The primary structure comprises 432 residues: Probable rhamnogalacturonase E (432 aa).

The N-terminal stretch at 1–21 (MQSKTFSVLSSCLLLIATVQG) is a signal peptide. C42 and C68 are disulfide-bonded. N-linked (GlcNAc...) asparagine glycans are attached at residues N53, N91, and N106. D221 serves as the catalytic Proton donor. Cysteines 223 and 240 form a disulfide. N241 and N256 each carry an N-linked (GlcNAc...) asparagine glycan. Residue H296 is part of the active site. 2 disulfides stabilise this stretch: C329/C335 and C357/C366.

The protein belongs to the glycosyl hydrolase 28 family.

The protein resides in the secreted. In terms of biological role, pectinolytic enzymes consist of four classes of enzymes: pectine lyase, polygalacturonase, pectin methylesterase and rhamnogalacturonase. Hydrolyzes alpha-D-galacturonopyranosyl-(1,2)-alpha-L-rhamnopyranosyl linkages in the backbone of the hairy regions of pectins. In Aspergillus oryzae (strain ATCC 42149 / RIB 40) (Yellow koji mold), this protein is Probable rhamnogalacturonase E (rhgE).